Reading from the N-terminus, the 577-residue chain is Protein downstream neighbor of son homolog (577 aa).

2 disordered regions span residues 1–67 (MAEL…KRRN) and 328–382 (FTQP…LEEM). Residues 362 to 375 (ETDEVSDESDEDES) show a composition bias toward acidic residues.

It belongs to the DONSON family. Component of the replisome complex.

It localises to the nucleus. Its function is as follows. Replisome component that maintains genome stability by protecting stalled or damaged replication forks. After the induction of replication stress, required for the stabilization of stalled replication forks, the efficient activation of the intra-S-phase and G/2M cell-cycle checkpoints and the maintenance of genome stability. This Xenopus tropicalis (Western clawed frog) protein is Protein downstream neighbor of son homolog.